A 376-amino-acid chain; its full sequence is Metal tolerance protein 6 (376 aa).

Residues 1–28 (MAAAAGVAAGTGRGSGEGEELLPNAVEG) are disordered. Over 1-123 (MAAAAGVAAG…CEKVARSEAL (123 aa)) the chain is Cytoplasmic. A helical membrane pass occupies residues 124 to 144 (AIRLSNIANMVLFAAKVYASI). Residues 145-149 (RSGSL) lie on the Vacuolar side of the membrane. A helical membrane pass occupies residues 150-170 (AIIASTLDSLLDLLSGFILWF). The Cytoplasmic segment spans residues 171-191 (TAFSKKTSNPYRYPIGKRRMQ). A helical transmembrane segment spans residues 192-212 (PLGILVFASVMATLGLQIILE). Over 213–231 (STRSLFYDGDTFRLTKEQE) the chain is Vacuolar. A helical transmembrane segment spans residues 232-252 (KWVVDIMLSVTSVKLLLVVYC). Residues 253 to 376 (RSFTNEILAI…PEHARSHDTL (124 aa)) are Cytoplasmic-facing.

The protein belongs to the cation diffusion facilitator (CDF) transporter (TC 2.A.4) family. SLC30A subfamily.

The protein localises to the vacuole membrane. In terms of biological role, involved in sequestration of excess metal in the cytoplasm into vacuoles to maintain metal homeostasis. The chain is Metal tolerance protein 6 (MTP6) from Oryza sativa subsp. japonica (Rice).